The primary structure comprises 771 residues: MNPEERLVTWLISLGVLESPKKTVCDPEEFLKSSLKNGVVLCKLINRLLPGSVEKYCLEPQTEADCIDNINDFLKGCATLQVEVFEPDDLYSGANFSKVLNTLLAVNKATEDQLSERPCGRSSSLSAATSSQTNPQVAVPSTAPEQHSEEKAEMTENGSHQLIVKARFNFKQTNEDELSVCKGDIIYVTRVEEGGWWEGTLNGRTGWFPSNYVREIKPSERPLSPKAIKGFDTAPLTKNYYTVVLQNILDTEKEYAKELQSLLVTYLRPLQSNNNLSTVEFTCLLGNFEEVCTFQQTLCQALEECSKFPENQHKVGGCLLNLMPHFKSMYLAYCANHPSAVNVLTQHSDDLERFMENQGASSPGILILTTSLSKPFMRLEKYVTLLQELERHMEDTHPDHQDILKAIIAFKTLMGQCQDLRKRKQLELQILSEPIQAWEGDDIKTLGNVIFMSQVVMQHGACEEKEERYFLLFSSVLIMLSASPRMSGFMYQGKIPIAGMVVNRLDEIEGSDCMFEITGSTVERIVVHCNNNQDFQEWMEQLNRLTKGPTSCGSLSKTSSSSCSTHSSFSSTGQPRGPLEPPQIIKPWSLSCLRPAPPLRPSAALGYKERMSYILKESSKSPKTMKKFLHKRKTERKASEEEYVIRKSTAALEEDAQILKVIEAYCTSASFQQGTRKDSVPQVLLPEEEKLIIEETRSNGQTIIEEKSLVDTVYALKDEVKELKQENKKMKQCLEEELKSRKDLEKLVRKLLKQTDECIRSESSSKTSILQ.

Positions 1 to 111 constitute a Calponin-homology (CH) domain; that stretch reads MNPEERLVTW…TLLAVNKATE (111 aa). A disordered region spans residues 115 to 157; it reads SERPCGRSSSLSAATSSQTNPQVAVPSTAPEQHSEEKAEMTEN. A compositionally biased stretch (low complexity) spans 122–131; it reads SSSLSAATSS. At S126 the chain carries Phosphoserine. T133 is subject to Phosphothreonine. The region spanning 159-218 is the SH3 domain; it reads SHQLIVKARFNFKQTNEDELSVCKGDIIYVTRVEEGGWWEGTLNGRTGWFPSNYVREIKP. S224 carries the post-translational modification Phosphoserine. In terms of domain architecture, DH spans 240–420; that stretch reads YYTVVLQNIL…KTLMGQCQDL (181 aa). The PH domain occupies 442-547; it reads DIKTLGNVIF…WMEQLNRLTK (106 aa). S487 is subject to Phosphoserine. Low complexity predominate over residues 556–572; it reads SKTSSSSCSTHSSFSST. Residues 556 to 580 form a disordered region; that stretch reads SKTSSSSCSTHSSFSSTGQPRGPLE. Residues S639 and S679 each carry the phosphoserine modification.

As to quaternary structure, interacts with PAK kinases through the SH3 domain. Interacts with GIT1. Component of cytoplasmic complexes, which also contain PXN, GIT1 and PAK1. Interacts with BIN2. Identified in a complex with BIN2 and GIT2. Interacts with PARVB. Interacts with PARVG; the guanine nucleotide exchange factor activity of ARHGEF6 is essential for PARVG-induced enhancement of cell spreading. As to expression, detected in adult heart, spleen, lung, skeletal muscle, kidney and testis. Detected throughout embryogenesis.

It is found in the cell projection. It localises to the lamellipodium. Acts as a RAC1 guanine nucleotide exchange factor (GEF). This chain is Rho guanine nucleotide exchange factor 6 (Arhgef6), found in Mus musculus (Mouse).